We begin with the raw amino-acid sequence, 504 residues long: Maturase K (504 aa).

The protein belongs to the intron maturase 2 family. MatK subfamily.

The protein localises to the plastid. Its subcellular location is the chloroplast. In terms of biological role, usually encoded in the trnK tRNA gene intron. Probably assists in splicing its own and other chloroplast group II introns. In Arabidopsis halleri, this protein is Maturase K.